The following is a 240-amino-acid chain: Insulin-like growth factor-binding protein 6 (240 aa).

The N-terminal stretch at 1–27 (MTPHRLLPPLLLLLALLLAASPGGALA) is a signal peptide. One can recognise an IGFBP N-terminal domain in the interval 28-107 (RCPGCGQGVQ…LLGRGRCLPA (80 aa)). 5 disulfides stabilise this stretch: Cys-29–Cys-32, Cys-40–Cys-44, Cys-57–Cys-63, Cys-71–Cys-84, and Cys-78–Cys-104. The tract at residues 109–160 (APAVAEENPKESKPQAGTARPQDVNRRDQQRNPGTSTTPSQPNSAGVQDTEM) is disordered. The O-linked (HexNAc...) threonine glycan is linked to Thr-126. A compositionally biased stretch (polar residues) spans 139–155 (RNPGTSTTPSQPNSAGV). Ser-144 is a glycosylation site (O-linked (HexNAc...) serine). O-linked (HexNAc...) threonine glycans are attached at residues Thr-145 and Thr-146. O-linked (HexNAc...) serine glycosylation is present at Ser-152. Residues 160-234 (MGPCRRHLDS…SPDGNGSSSC (75 aa)) form the Thyroglobulin type-1 domain. Intrachain disulfides connect Cys-163–Cys-190, Cys-201–Cys-212, and Cys-214–Cys-234. Residues 217–240 (RMGKSLPGSPDGNGSSSCPTGSSG) are disordered. Residues 228 to 240 (GNGSSSCPTGSSG) show a composition bias toward polar residues.

In terms of assembly, interacts (via C-terminal domain) with PHB2. O-linked glycans consist of hexose (probably Gal), N-acetylhexosamine (probably GalNAc) and sialic acid residues. O-glycosylated with core 1 or possibly core 8 glycans. O-glycosylated on one site only in the region AA 143-168 in cerebrospinal fluid.

The protein localises to the secreted. Its function is as follows. IGF-binding proteins prolong the half-life of the IGFs and have been shown to either inhibit or stimulate the growth promoting effects of the IGFs on cell culture. They alter the interaction of IGFs with their cell surface receptors. Activates the MAPK signaling pathway and induces cell migration. The sequence is that of Insulin-like growth factor-binding protein 6 from Homo sapiens (Human).